We begin with the raw amino-acid sequence, 353 residues long: UPF0283 membrane protein YcjF (353 aa).

A compositionally biased stretch (basic and acidic residues) spans 1–19; it reads MSEPLKPRIDFAEPLKEEP. The interval 1 to 35 is disordered; the sequence is MSEPLKPRIDFAEPLKEEPTSAFKAQQTFSEAESR. The next 3 helical transmembrane spans lie at 70-90, 100-120, and 213-233; these read MVMGGLALFGASVVGQGVQWT, VALGGCAAGALIIGAGVGSVV, and ESTLMIAVSPLALVDMAFIAW.

Belongs to the UPF0283 family.

The protein localises to the cell inner membrane. The chain is UPF0283 membrane protein YcjF from Salmonella dublin (strain CT_02021853).